Reading from the N-terminus, the 304-residue chain is Bifunctional protein FolD (304 aa).

NADP(+) is bound by residues 176–178 (GAS), isoleucine 201, and isoleucine 242.

This sequence belongs to the tetrahydrofolate dehydrogenase/cyclohydrolase family. In terms of assembly, homodimer.

The enzyme catalyses (6R)-5,10-methylene-5,6,7,8-tetrahydrofolate + NADP(+) = (6R)-5,10-methenyltetrahydrofolate + NADPH. It catalyses the reaction (6R)-5,10-methenyltetrahydrofolate + H2O = (6R)-10-formyltetrahydrofolate + H(+). It functions in the pathway one-carbon metabolism; tetrahydrofolate interconversion. Catalyzes the oxidation of 5,10-methylenetetrahydrofolate to 5,10-methenyltetrahydrofolate and then the hydrolysis of 5,10-methenyltetrahydrofolate to 10-formyltetrahydrofolate. The protein is Bifunctional protein FolD of Gluconobacter oxydans (strain 621H) (Gluconobacter suboxydans).